The sequence spans 50 residues: uncharacterized protein (50 aa).

This is an uncharacterized protein from Dictyostelium discoideum (Social amoeba).